Reading from the N-terminus, the 356-residue chain is MPEEKQKKSVLEKALKRIEENFGKGSIMILGDETQVQPVEVIPTGSLAIDIATGVGGYPRGRIVEIFGQESSGKTTLALHAIAEAQKMGGVAAFIDAEHALDPVYAKNLGVDLKSLLISQPDHGEQALEIVDELVRSGVVDLIVVDSVAALVPRAEIEGAMGDMQVGLQARLMSQALRKIAGSVNKSKAVVIFTNQIRMKIGVMFGSPETTTGGLALKFYATMRMEVRRGEPIKEGKDVIGNVISVKIVKNKVAPPFKTAQTYIIYGKGIDREYELFNIAVNEGIVDRKGSWYYYTTLKGEEVSLGQGSSNAVQFLKDNPEIAGEIERRIREKYGLLSVEKEEQRKEKKSSGEEAS.

68–75 serves as a coordination point for ATP; it reads GQESSGKT.

Belongs to the RecA family.

It is found in the cytoplasm. Its function is as follows. Can catalyze the hydrolysis of ATP in the presence of single-stranded DNA, the ATP-dependent uptake of single-stranded DNA by duplex DNA, and the ATP-dependent hybridization of homologous single-stranded DNAs. It interacts with LexA causing its activation and leading to its autocatalytic cleavage. In Thermotoga maritima (strain ATCC 43589 / DSM 3109 / JCM 10099 / NBRC 100826 / MSB8), this protein is Protein RecA.